The primary structure comprises 335 residues: Ketol-acid reductoisomerase (NADP(+)) (335 aa).

The KARI N-terminal Rossmann domain maps to 5 to 185; the sequence is SKIYTDNDAN…GATRAGVIPT (181 aa). Residues 28-31, serine 56, and 86-89 each bind NADP(+); these read YGSQ and DMVQ. Residue histidine 111 is part of the active site. NADP(+) is bound at residue glycine 137. The region spanning 186 to 331 is the KARI C-terminal knotted domain; that stretch reads TFKEETETDL…NQLRDLVQKG (146 aa). Aspartate 194, glutamate 198, glutamate 230, and glutamate 234 together coordinate Mg(2+). Substrate is bound at residue serine 255.

It belongs to the ketol-acid reductoisomerase family. It depends on Mg(2+) as a cofactor.

It carries out the reaction (2R)-2,3-dihydroxy-3-methylbutanoate + NADP(+) = (2S)-2-acetolactate + NADPH + H(+). It catalyses the reaction (2R,3R)-2,3-dihydroxy-3-methylpentanoate + NADP(+) = (S)-2-ethyl-2-hydroxy-3-oxobutanoate + NADPH + H(+). The protein operates within amino-acid biosynthesis; L-isoleucine biosynthesis; L-isoleucine from 2-oxobutanoate: step 2/4. It functions in the pathway amino-acid biosynthesis; L-valine biosynthesis; L-valine from pyruvate: step 2/4. Involved in the biosynthesis of branched-chain amino acids (BCAA). Catalyzes an alkyl-migration followed by a ketol-acid reduction of (S)-2-acetolactate (S2AL) to yield (R)-2,3-dihydroxy-isovalerate. In the isomerase reaction, S2AL is rearranged via a Mg-dependent methyl migration to produce 3-hydroxy-3-methyl-2-ketobutyrate (HMKB). In the reductase reaction, this 2-ketoacid undergoes a metal-dependent reduction by NADPH to yield (R)-2,3-dihydroxy-isovalerate. The protein is Ketol-acid reductoisomerase (NADP(+)) of Saccharolobus solfataricus (strain ATCC 35092 / DSM 1617 / JCM 11322 / P2) (Sulfolobus solfataricus).